Consider the following 453-residue polypeptide: MISQFFILSSKGDPLIYKDFRGDSGGRDVAELFYRKLTGLPGGESPVVMYHDDRHFIHIRHSGLYLVATTSENVSPFSLLELLSRLATLLGDYCGSLNEGTISRNVALVYELLDEVLDYGYVQTTSTDMLRNFIQTEAAVSKPFSLFDLSSVGLFGAETQQNRVAPSSAASRPVLSSRSDQSQKNEVFLDVVERLSVLIASNGSLLKVDVQGEIRLKSFLPSSSEICIGLTEEFCVGKSELRGYGPGIRVDEVSFHSSVNLDEFESHRILHLQPPQGELTVMRYQLSDDLPSPLPFRLFPSVQWDQGSGRLQVYLKLRCDLPPKSQALNIHLHLPLPRGVVSLSQELSSPDQKAELGEGALHWDLPRVQGGSQLSGLFQMDVPGLQGPPSRGPSPSAPPLGLGPASLSFELPRHTCSGLQVRFLRLSFSACGNANPHKWVRHLSHSNAYVIRI.

The region spanning 184-452 (KNEVFLDVVE…LSHSNAYVIR (269 aa)) is the MHD domain. A disordered region spans residues 383–403 (PGLQGPPSRGPSPSAPPLGLG).

Belongs to the adaptor complexes medium subunit family. As to quaternary structure, adaptor protein complex 4 (AP-4) is a heterotetramer composed of two large adaptins (epsilon-type subunit AP4E1 and beta-type subunit AP4B1), a medium adaptin (mu-type subunit AP4M1) and a small adaptin (sigma-type AP4S1). Interacts with tyrosine-based sorting signals on the cytoplasmic tail of cargo proteins such as APP, ATG9A, LAMP2 and NAGPA. Interacts with the C-terminal domain of GRID2. Interacts with GRIA1 and GRIA2; the interaction is indirect via CACNG3. Interacts with CACNG3; CACNG3 associates GRIA1 and GRIA2 with the adaptor protein complex 4 (AP-4) to target them to the somatodendritic compartment of neurons. Interacts with HOOK1 and HOOK2; the interactions are direct, mediate the interaction between FTS-Hook-FHIP (FHF) complex and AP-4 and the perinuclear distribution of AP-4. In terms of tissue distribution, high levels in the olfactory bulb, the cerebral cortex, the granule and Purkinje cell layers of the cerebellar cortex and the CA3 region of the hippocampus. Low levels found in molecular layer of cerebellum.

Its subcellular location is the golgi apparatus. It localises to the trans-Golgi network membrane. The protein resides in the early endosome. Its function is as follows. Component of the adaptor protein complex 4 (AP-4). Adaptor protein complexes are vesicle coat components involved both in vesicle formation and cargo selection. They control the vesicular transport of proteins in different trafficking pathways. AP-4 forms a non clathrin-associated coat on vesicles departing the trans-Golgi network (TGN) and may be involved in the targeting of proteins from the trans-Golgi network (TGN) to the endosomal-lysosomal system. It is also involved in protein sorting to the basolateral membrane in epithelial cells and the proper asymmetric localization of somatodendritic proteins in neurons. Within AP-4, the mu-type subunit AP4M1 is directly involved in the recognition and binding of tyrosine-based sorting signals found in the cytoplasmic part of cargos. The adaptor protein complex 4 (AP-4) may also recognize other types of sorting signal. The sequence is that of AP-4 complex subunit mu-1 from Rattus norvegicus (Rat).